The sequence spans 441 residues: Chromosomal replication initiator protein DnaA (441 aa).

Residues 1 to 71 are domain I, interacts with DnaA modulators; that stretch reads MDIRWEEILE…AVYQVVGDRF (71 aa). A domain II region spans residues 71–99; that stretch reads FKVSILTESETSSHVLKEVIQSKFDDSDS. Positions 100–318 are domain III, AAA+ region; it reads DLNPEYIFSN…GIVNDLVMYK (219 aa). ATP is bound by residues G143, G145, K146, and T147. A domain IV, binds dsDNA region spans residues 319–441; that stretch reads KAYEYFLLTE…HTIKHKISFQ (123 aa).

The protein belongs to the DnaA family. As to quaternary structure, oligomerizes as a right-handed, spiral filament on DNA at oriC.

Its subcellular location is the cytoplasm. Its function is as follows. Plays an essential role in the initiation and regulation of chromosomal replication. ATP-DnaA binds to the origin of replication (oriC) to initiate formation of the DNA replication initiation complex once per cell cycle. Binds the DnaA box (a 9 base pair repeat at the origin) and separates the double-stranded (ds)DNA. Forms a right-handed helical filament on oriC DNA; dsDNA binds to the exterior of the filament while single-stranded (ss)DNA is stabiized in the filament's interior. The ATP-DnaA-oriC complex binds and stabilizes one strand of the AT-rich DNA unwinding element (DUE), permitting loading of DNA polymerase. After initiation quickly degrades to an ADP-DnaA complex that is not apt for DNA replication. Binds acidic phospholipids. The sequence is that of Chromosomal replication initiator protein DnaA from Leptospira biflexa serovar Patoc (strain Patoc 1 / Ames).